Here is a 375-residue protein sequence, read N- to C-terminus: Anhydro-N-acetylmuramic acid kinase (375 aa).

19–26 provides a ligand contact to ATP; sequence GTSLDGVD.

Belongs to the anhydro-N-acetylmuramic acid kinase family.

The enzyme catalyses 1,6-anhydro-N-acetyl-beta-muramate + ATP + H2O = N-acetyl-D-muramate 6-phosphate + ADP + H(+). It functions in the pathway amino-sugar metabolism; 1,6-anhydro-N-acetylmuramate degradation. It participates in cell wall biogenesis; peptidoglycan recycling. Functionally, catalyzes the specific phosphorylation of 1,6-anhydro-N-acetylmuramic acid (anhMurNAc) with the simultaneous cleavage of the 1,6-anhydro ring, generating MurNAc-6-P. Is required for the utilization of anhMurNAc either imported from the medium or derived from its own cell wall murein, and thus plays a role in cell wall recycling. The chain is Anhydro-N-acetylmuramic acid kinase from Ruegeria sp. (strain TM1040) (Silicibacter sp.).